The primary structure comprises 573 residues: MLRLPTVLRQMRPVSRALAPHLTRAYAKDVKFGADARALMLQGVDLLADAVAVTMGPKGRTVIIEQSWGSPKVTKDGVTVAKAIDLKDKYKNIGAKLVQDVANNTNEEAGDGTTTATVLARSIAKEGFEKISKGANPVEIRRGVMLAVDAVIAELKKQSKPVTTPEEIAQVATISANGDKDIGNIISDAMKKVGRKGVITVKDGKTLNDELEIIEGMKFDRGYISPYFINTSKGQKCEFQDAYVLLSEKKISSVQSIVPALEIANAHRKPLVIIAEDVDGEALSTLVLNRLKVGLQVVAVKAPGFGDNRKNQLKDMAIATGGAVFGEEGLNLNLEDVQAHDLGKVGEVIVTKDDAMLLKGKGEKAQIEKRIQEITEQLEITTSEYEKEKLNERLAKLSDGVAVLKVGGTSDVEVNEKKDRVTDALNATRAAVEEGIVLGGGCALLRCIPALDSLKPSNEDQKIGIEIIKRALKIPAMTIAKNAGVEGSLIVEKILQSSSEIGYDAMLGDFVNMVEKGIIDPTKVVRTALLDAAGVASLLTTAEAVVTEIPKEEKDPGMGAMGGMGGGMGGGMF.

Residues 1–26 (MLRLPTVLRQMRPVSRALAPHLTRAY) constitute a mitochondrion transit peptide. The residue at position 31 (lysine 31) is an N6-succinyllysine. Phosphoserine is present on residues serine 67 and serine 70. Residue lysine 75 participates in ATP binding. Lysine 75 bears the N6-acetyllysine mark. An N6-acetyllysine; alternate modification is found at lysine 82. Lysine 82 is subject to N6-succinyllysine; alternate. Lysine 87 is modified (N6-acetyllysine). Tyrosine 90 carries the phosphotyrosine modification. Lysine 91 is subject to N6-acetyllysine. An ATP-binding site is contributed by 111–115 (DGTTT). Lysine 125 carries the post-translational modification N6-acetyllysine; alternate. The residue at position 125 (lysine 125) is an N6-succinyllysine; alternate. Lysine 130 is subject to N6-acetyllysine. Lysine 133 bears the N6-acetyllysine; alternate mark. Lysine 133 is modified (N6-succinyllysine; alternate). N6-malonyllysine; alternate is present on lysine 133. An N6-acetyllysine modification is found at lysine 156. 5 positions are modified to N6-acetyllysine; alternate: lysine 191, lysine 202, lysine 205, lysine 218, and lysine 236. N6-succinyllysine; alternate occurs at positions 191, 202, 205, 218, and 236. At lysine 249 the chain carries N6-acetyllysine. Lysine 250 bears the N6-acetyllysine; alternate mark. Lysine 250 is subject to N6-succinyllysine; alternate. 2 positions are modified to N6-acetyllysine: lysine 269 and lysine 292. N6-succinyllysine is present on lysine 301. Lysine 314 bears the N6-acetyllysine mark. Lysine 352 carries the post-translational modification N6-acetyllysine; alternate. Residue lysine 352 is modified to N6-succinyllysine; alternate. N6-acetyllysine occurs at positions 359 and 389. Lysine 396 bears the N6-acetyllysine; alternate mark. Lysine 396 is modified (N6-succinyllysine; alternate). Serine 410 bears the Phosphoserine mark. Residue glycine 440 coordinates ATP. Position 455 is an N6-acetyllysine; alternate (lysine 455). Lysine 455 is subject to N6-succinyllysine; alternate. Position 469 is an N6-acetyllysine (lysine 469). The residue at position 481 (lysine 481) is an N6-acetyllysine; alternate. Residue lysine 481 is modified to N6-succinyllysine; alternate. Serine 488 is subject to Phosphoserine. Aspartate 520 is an ATP binding site. A Glycyl lysine isopeptide (Lys-Gly) (interchain with G-Cter in SUMO2) cross-link involves residue lysine 551.

It belongs to the chaperonin (HSP60) family. Homoheptamer arranged in a ring structure. The functional units of these chaperonins consist of heptameric rings of the large subunit Hsp60, which function as a back-to-back double ring. Interacts with 2 heptameric Hsp10 rings to form the symmetrical football complex. Interacts with HRAS. Interacts with ATAD3A. Interacts with ETFBKMT and EEF1AKMT3. Interacts with MFHAS1.

It localises to the mitochondrion matrix. It catalyses the reaction ATP + H2O + a folded polypeptide = ADP + phosphate + an unfolded polypeptide.. Chaperonin implicated in mitochondrial protein import and macromolecular assembly. Together with Hsp10, facilitates the correct folding of imported proteins. May also prevent misfolding and promote the refolding and proper assembly of unfolded polypeptides generated under stress conditions in the mitochondrial matrix. The functional units of these chaperonins consist of heptameric rings of the large subunit Hsp60, which function as a back-to-back double ring. In a cyclic reaction, Hsp60 ring complexes bind one unfolded substrate protein per ring, followed by the binding of ATP and association with 2 heptameric rings of the co-chaperonin Hsp10. This leads to sequestration of the substrate protein in the inner cavity of Hsp60 where, for a certain period of time, it can fold undisturbed by other cell components. Synchronous hydrolysis of ATP in all Hsp60 subunits results in the dissociation of the chaperonin rings and the release of ADP and the folded substrate protein. This chain is 60 kDa heat shock protein, mitochondrial (HSPD1), found in Cricetulus griseus (Chinese hamster).